A 138-amino-acid polypeptide reads, in one-letter code: ER-derived vesicles protein ERV14 (138 aa).

Topologically, residues 2 to 6 are cytoplasmic; the sequence is GAWLF. The helical transmembrane segment at 7-27 threads the bilayer; the sequence is ILAVVVNCINLFGQVHFTILY. Over 28 to 52 the chain is Extracellular; sequence ADLEADYINPIELCSKVNKLITPEA. Residues 53–73 traverse the membrane as a helical segment; that stretch reads ALHGALSLLFLLNGYWFVFLL. Topologically, residues 74–111 are cytoplasmic; it reads NLPVLAYNLNKIYNKVQLLDATEIFRTLGKHKRESFLK. The helical transmembrane segment at 112-132 threads the bilayer; that stretch reads LGFHLLMFFFYLYRMIMALIA. Topologically, residues 133–138 are extracellular; sequence ESGDDF.

It belongs to the cornichon family.

It is found in the endoplasmic reticulum membrane. The protein resides in the golgi apparatus membrane. Could regulate export of the bud site and axial growth sites selection protein AXL2 and possibly other secretory proteins from the endoplasmic reticulum in COPII-coated vesicles. Seems to be required for axial budding pattern in haploid cells. The chain is ER-derived vesicles protein ERV14 (ERV14) from Saccharomyces cerevisiae (strain ATCC 204508 / S288c) (Baker's yeast).